The chain runs to 486 residues: ATP synthase subunit beta (486 aa).

170–177 (GGAGVGKT) serves as a coordination point for ATP.

Belongs to the ATPase alpha/beta chains family. In terms of assembly, F-type ATPases have 2 components, CF(1) - the catalytic core - and CF(0) - the membrane proton channel. CF(1) has five subunits: alpha(3), beta(3), gamma(1), delta(1), epsilon(1). CF(0) has three main subunits: a(1), b(2) and c(9-12). The alpha and beta chains form an alternating ring which encloses part of the gamma chain. CF(1) is attached to CF(0) by a central stalk formed by the gamma and epsilon chains, while a peripheral stalk is formed by the delta and b chains.

Its subcellular location is the cell membrane. The enzyme catalyses ATP + H2O + 4 H(+)(in) = ADP + phosphate + 5 H(+)(out). In terms of biological role, produces ATP from ADP in the presence of a proton gradient across the membrane. The catalytic sites are hosted primarily by the beta subunits. This is ATP synthase subunit beta from Kineococcus radiotolerans (strain ATCC BAA-149 / DSM 14245 / SRS30216).